Here is a 56-residue protein sequence, read N- to C-terminus: MILYIIVAISILLNIILGIKVIMLQKELEEVKKATRLTKEEVEKLNERIRKLKLGG.

Residues 2–22 traverse the membrane as a helical segment; sequence ILYIIVAISILLNIILGIKVI.

Its subcellular location is the membrane. This is an uncharacterized protein from Methanocaldococcus jannaschii (strain ATCC 43067 / DSM 2661 / JAL-1 / JCM 10045 / NBRC 100440) (Methanococcus jannaschii).